Consider the following 159-residue polypeptide: SsrA-binding protein (159 aa).

The tract at residues 137 to 159 (KRQTEKERDWEREKQRLFQRDQR) is disordered.

It belongs to the SmpB family.

The protein resides in the cytoplasm. Its function is as follows. Required for rescue of stalled ribosomes mediated by trans-translation. Binds to transfer-messenger RNA (tmRNA), required for stable association of tmRNA with ribosomes. tmRNA and SmpB together mimic tRNA shape, replacing the anticodon stem-loop with SmpB. tmRNA is encoded by the ssrA gene; the 2 termini fold to resemble tRNA(Ala) and it encodes a 'tag peptide', a short internal open reading frame. During trans-translation Ala-aminoacylated tmRNA acts like a tRNA, entering the A-site of stalled ribosomes, displacing the stalled mRNA. The ribosome then switches to translate the ORF on the tmRNA; the nascent peptide is terminated with the 'tag peptide' encoded by the tmRNA and targeted for degradation. The ribosome is freed to recommence translation, which seems to be the essential function of trans-translation. The protein is SsrA-binding protein of Cellvibrio japonicus (strain Ueda107) (Pseudomonas fluorescens subsp. cellulosa).